The chain runs to 868 residues: MSLQASEGCPGLGTNVFVPQSPQTDEEGSRSGRSFSEFEDTQDLDTPGLPPFCPMAPWGSEEGLSPCHLLTVRVIRMKNVRQADMLSQTDCFVSLWLPTASQKKLRTRTISNCPNPEWNESFNFQIQSRVKNVLELSVCDEDTVTPDDHLLTVLYDLTKLCFRKKTHVKFPLNPQGMEELEVEFLLEESPSPPETLVTNGVLVSRQVSCLEVHAQSRRRRKREKMKDLLVMVNESFENTQRVRPCLEPCCPTSACFQTAACFHYPKYFQSQVHVEVPKSHWSCGLCCRSRKKGPISQPLDCLSDGQVMTLPVGESYELHMKSTPCPETLDVRLGFSLCPAELEFLQKRKVVVAKALKQVLQLEEDLQEDEVPLIAIMATGGGTRSMTSMYGHLLGLQKLNLLDCASYITGLSGATWTMATLYRDPDWSSKNLEPAIFEARRHVVKDKLPSLFPDQLRKFQEELRQRSQEGYRVTFTDFWGLLIETCLGDERNECKLSDQRAALSCGQNPLPIYLTINVKDDVSNQDFREWFEFSPYEVGLQKYGAFIPSELFGSEFFMGRLVKRIPESRICYMLGLWSSIFSLNLLDAWNLSHTSEEFFHRWTREKVQDIEDEPILPEIPKCDANILETTVVIPGSWLSNSFREILTHRSFVSEFHNFLSGLQLHTNYLQNGQFSRWKDTVLDGFPNQLTESANHLCLLDTAFFVNSSYPPLLRPERKADLIIHLNYCAGSQTKPLKQTCEYCTVQNIPFPKYELPDENENLKECYLMENPQEPDAPIVTFFPLINDTFRKYKAPGVERSPEELEQGQVDIYGPKTPYATKELTYTEATFDKLVKLSEYNILNNKDTLLQALRLAVEKKKRLKGQCPS.

Residues 1-46 form a disordered region; the sequence is MSLQASEGCPGLGTNVFVPQSPQTDEEGSRSGRSFSEFEDTQDLDT. One can recognise a C2 domain in the interval 46–170; the sequence is TPGLPPFCPM…CFRKKTHVKF (125 aa). Ca(2+) contacts are provided by Asp84, Asp90, Asp140, Asp142, and Asp148. The 533-residue stretch at 324–856 folds into the PLA2c domain; the sequence is PCPETLDVRL…TLLQALRLAV (533 aa). Ser412 acts as the Nucleophile in catalysis. Catalysis depends on Asp700, which acts as the Proton acceptor. A Phosphoserine modification is found at Ser800. The required for localization at membrane structures stretch occupies residues 857 to 868; sequence EKKKRLKGQCPS.

Ca(2+) serves as cofactor.

It localises to the cytoplasm. Its subcellular location is the cytosol. The protein localises to the early endosome membrane. The protein resides in the lysosome membrane. It is found in the cell membrane. It catalyses the reaction a 1,2-diacyl-sn-glycero-3-phosphoethanolamine + a 1,2-diacyl-sn-glycero-3-phosphocholine = an N-acyl-1,2-diacyl-sn-glycero-3-phosphoethanolamine + a 2-acyl-sn-glycero-3-phosphocholine + H(+). The enzyme catalyses 1-hexadecanoyl-2-octadecanoyl-sn-glycero-3-phosphocholine + 1,2-di-(9Z-octadecenoyl)-sn-glycero-3-phosphoethanolamine = 2-octadecanoyl-sn-glycero-3-phosphocholine + N-hexadecanoyl-1,2-di-(9Z-octadecenoyl)-sn-glycero-3-phosphoethanolamine + H(+). The catalysed reaction is 1-octadecanoyl-2-hexadecanoyl-sn-glycero-3-phosphocholine + 1,2-di-(9Z-octadecenoyl)-sn-glycero-3-phosphoethanolamine = N-octadecanoyl-1,2-di-(9Z-octadecenoyl)-sn-glycero-3-phosphoethanolamine + 2-hexadecanoyl-sn-glycero-3-phosphocholine + H(+). It carries out the reaction 1,2-di-(9Z-octadecenoyl)-sn-glycero-3-phosphoethanolamine + 1,2-dihexadecanoyl-sn-glycero-3-phosphocholine = N-hexadecanoyl-1,2-di-(9Z-octadecenoyl)-sn-glycero-3-phosphoethanolamine + 2-hexadecanoyl-sn-glycero-3-phosphocholine + H(+). It catalyses the reaction 1,2-di-(5Z,8Z,11Z,14Z-eicosatetraenoyl)-sn-glycero-3-phosphocholine + 1,2-di-(9Z-octadecenoyl)-sn-glycero-3-phosphoethanolamine = N-(5Z,8Z,11Z,14Z-eicosatetraenoyl)-1,2-di-(9Z-octadecenoyl)-sn-glycero-3-phosphoethanolamine + 2-(5Z,8Z,11Z,14Z)-eicosatetraenoyl-sn-glycero-3-phosphocholine + H(+). The enzyme catalyses 2 1,2-di-(9Z-octadecenoyl)-sn-glycero-3-phosphoethanolamine = N,1,2-tri-(9Z-octadecenoyl)-sn-glycero-3-phosphoethanolamine + 2-(9Z-octadecenoyl)-sn-glycero-3-phosphoethanolamine + H(+). The catalysed reaction is 1-(1Z-octadecenyl)-2-(9Z-octadecenoyl)-sn-glycero-3-phosphoethanolamine + 1,2-dihexadecanoyl-sn-glycero-3-phosphocholine = 1-O-(1Z-octadecenoyl)-2-(9Z-octadecenoyl)-sn-glycero-3-phospho-N-hexadecanoyl-ethanolamine + 2-hexadecanoyl-sn-glycero-3-phosphocholine + H(+). It carries out the reaction a 1,2-diacyl-sn-glycero-3-phosphocholine + H2O = a 1-acyl-sn-glycero-3-phosphocholine + a fatty acid + H(+). It catalyses the reaction 1-hexadecanoyl-2-(5Z,8Z,11Z,14Z-eicosatetraenoyl)-sn-glycero-3-phosphocholine + H2O = 1-hexadecanoyl-sn-glycero-3-phosphocholine + (5Z,8Z,11Z,14Z)-eicosatetraenoate + H(+). The enzyme catalyses 1-hexadecanoyl-sn-glycero-3-phosphocholine + H2O = sn-glycerol 3-phosphocholine + hexadecanoate + H(+). With respect to regulation, stimulated by cytosolic Ca(2+). Stimulated by anionic phospholipids such as phosphatidylserines, phosphatidates and phosphatidylinositols. Calcium-dependent N-acyltransferase involved in the biosynthesis of N-acyl ethanolamines (NAEs) in the brain. Transfers the sn-1 fatty acyl chain of phosphatidylcholine (fatty acyl donor) to the amine group of phosphatidylethanolamine (fatty acyl acceptor) to generate N-acyl phosphatidylethanolamine (NAPE). Similarly can use plasmenylethanolamine as a fatty acyl acceptor to form N-acyl plasmenylethanolamine (N-Acyl-PlsEt). Both NAPE and N-Acyl-PlsEt can serve as precursors of bioactive NAEs like N-arachidonoyl phosphatidylethanolamine also called anandamide. Has weak phospholipase A2 and lysophospholipase activities. Regulates intracellular membrane trafficking that requires modulation of membrane curvature as it occurs by enrichment in lysophospholipids. Promotes tubule formation involved in clathrin-independent endocytotic trafficking and cargo recycling. This chain is Cytosolic phospholipase A2 epsilon, found in Homo sapiens (Human).